The chain runs to 220 residues: UPF0319 protein YccT (220 aa).

Positions 1–20 (MKTGALATFLALCLPVTVFA) are cleaved as a signal peptide.

Belongs to the UPF0319 family.

The chain is UPF0319 protein YccT from Salmonella enteritidis PT4 (strain P125109).